Consider the following 187-residue polypeptide: Flavin prenyltransferase UbiX (187 aa).

FMN contacts are provided by residues 9–11, Ser34, and Arg123; that span reads GAS. Tyr153 and Lys169 together coordinate dimethylallyl phosphate.

It belongs to the UbiX/PAD1 family.

It carries out the reaction dimethylallyl phosphate + FMNH2 = prenylated FMNH2 + phosphate. Its function is as follows. Flavin prenyltransferase that catalyzes the synthesis of the prenylated FMN cofactor (prenyl-FMN) for 4-hydroxy-3-polyprenylbenzoic acid decarboxylase UbiD. The prenyltransferase is metal-independent and links a dimethylallyl moiety from dimethylallyl monophosphate (DMAP) to the flavin N5 and C6 atoms of FMN. The chain is Flavin prenyltransferase UbiX from Helicobacter pylori (strain ATCC 700392 / 26695) (Campylobacter pylori).